Reading from the N-terminus, the 146-residue chain is Anti-sigma F factor (146 aa).

Belongs to the anti-sigma-factor family.

The enzyme catalyses L-seryl-[protein] + ATP = O-phospho-L-seryl-[protein] + ADP + H(+). It catalyses the reaction L-threonyl-[protein] + ATP = O-phospho-L-threonyl-[protein] + ADP + H(+). Functionally, binds to sigma F and blocks its ability to form an RNA polymerase holoenzyme (E-sigma F). Phosphorylates SpoIIAA on a serine residue. This phosphorylation may enable SpoIIAA to act as an anti-anti-sigma factor that counteracts SpoIIAB and thus releases sigma F from inhibition. This is Anti-sigma F factor from Halalkalibacterium halodurans (strain ATCC BAA-125 / DSM 18197 / FERM 7344 / JCM 9153 / C-125) (Bacillus halodurans).